Reading from the N-terminus, the 229-residue chain is Transmembrane emp24 domain-containing protein 5 (229 aa).

Residues 1–27 form the signal peptide; it reads MGDKIWLPFPVLLLAALPPVLLPGAAG. Residues 28 to 196 are Lumenal-facing; sequence FTPSLDSDFT…IQESNFDRVN (169 aa). Residues 45-126 enclose the GOLD domain; it reads KECFYQPMPL…EKVIFFELIL (82 aa). The helical transmembrane segment at 197-217 threads the bilayer; that stretch reads FWSMVNLVVMVVVSAIQVYML. Residues 218 to 229 are Cytoplasmic-facing; that stretch reads KSLFEDKRKSRT.

Belongs to the EMP24/GP25L family. As to quaternary structure, interacts with TMED9 and TMED10.

It is found in the endoplasmic reticulum membrane. Its subcellular location is the golgi apparatus. The protein localises to the cis-Golgi network membrane. The protein resides in the endoplasmic reticulum-Golgi intermediate compartment membrane. Potential role in vesicular protein trafficking, mainly in the early secretory pathway. Required for the maintenance of the Golgi apparatus; involved in protein exchange between Golgi stacks during assembly. Probably not required for COPI-vesicle-mediated retrograde transport. The polypeptide is Transmembrane emp24 domain-containing protein 5 (TMED5) (Homo sapiens (Human)).